A 754-amino-acid chain; its full sequence is ATP-dependent zinc metalloprotease FtsH (754 aa).

Residues 1-9 (MKQRMKKPS) lie on the Cytoplasmic side of the membrane. The helical transmembrane segment at 10 to 30 (LGTFILILILIGILAYVLWQF) threads the bilayer. The Extracellular portion of the chain corresponds to 31–186 (LSPKLGYKSL…FDRPRGNFLS (156 aa)). A helical transmembrane segment spans residues 187-207 (SFIVPYIPFLLISLFGFWLFF). The Cytoplasmic segment spans residues 208–754 (RLSQNSQAGG…ESKIDSSKEQ (547 aa)). ATP is bound at residue 277-284 (GPPGTGKT). H499 serves as a coordination point for Zn(2+). Residue E500 is part of the active site. Zn(2+) is bound by residues H503 and D577. The interval 713–754 (QEKSYENEDQNQNSLEAINYNIDDQDDDKNDSESKIDSSKEQ) is disordered. A compositionally biased stretch (basic and acidic residues) spans 743–754 (DSESKIDSSKEQ).

In the central section; belongs to the AAA ATPase family. It in the C-terminal section; belongs to the peptidase M41 family. As to quaternary structure, homohexamer. It depends on Zn(2+) as a cofactor.

Its subcellular location is the cell membrane. Functionally, acts as a processive, ATP-dependent zinc metallopeptidase for both cytoplasmic and membrane proteins. Plays a role in the quality control of integral membrane proteins. This is ATP-dependent zinc metalloprotease FtsH from Mesomycoplasma conjunctivae (strain ATCC 25834 / NCTC 10147 / HRC/581) (Mycoplasma conjunctivae).